The following is a 315-amino-acid chain: L-lactate dehydrogenase (315 aa).

NAD(+) contacts are provided by residues V16, D37, and 81 to 82 (GA). Substrate-binding positions include Q84, R90, and 122 to 125 (NPVD). Residues 120–122 (VSN) and S145 contribute to the NAD(+) site. 150-153 (DTAR) serves as a coordination point for substrate. 2 residues coordinate beta-D-fructose 1,6-bisphosphate: R155 and H170. H177 (proton acceptor) is an active-site residue. At Y224 the chain carries Phosphotyrosine. Residue T233 coordinates substrate.

Belongs to the LDH/MDH superfamily. LDH family. As to quaternary structure, homotetramer.

Its subcellular location is the cytoplasm. The catalysed reaction is (S)-lactate + NAD(+) = pyruvate + NADH + H(+). It functions in the pathway fermentation; pyruvate fermentation to lactate; (S)-lactate from pyruvate: step 1/1. Its activity is regulated as follows. Allosterically activated by fructose 1,6-bisphosphate (FBP). Functionally, catalyzes the conversion of lactate to pyruvate. In Treponema denticola (strain ATCC 35405 / DSM 14222 / CIP 103919 / JCM 8153 / KCTC 15104), this protein is L-lactate dehydrogenase.